Consider the following 439-residue polypeptide: Uracil-regulated protein 1 (439 aa).

Residues 1-24 (MLATEQSRPAECNGAHAHEKTEEV) are disordered. 268–272 (RVHDE) lines the GTP pocket. The Zn(2+) site is built by Cys273, Cys284, and Cys286. 315 to 317 (EGR) contributes to the GTP binding site. Catalysis depends on Asp353, which acts as the Proton acceptor. Arg355 (nucleophile) is an active-site residue. Residues Ser377 and Lys382 each coordinate GTP.

The protein belongs to the GTP cyclohydrolase II family.

The protein resides in the cytoplasm. It is found in the nucleus. In Schizosaccharomyces pombe (strain 972 / ATCC 24843) (Fission yeast), this protein is Uracil-regulated protein 1 (urg1).